Consider the following 61-residue polypeptide: UPF0434 protein MS0934 (61 aa).

It belongs to the UPF0434 family.

This chain is UPF0434 protein MS0934, found in Mannheimia succiniciproducens (strain KCTC 0769BP / MBEL55E).